Here is a 90-residue protein sequence, read N- to C-terminus: Small ribosomal subunit protein bS20 (90 aa).

The protein belongs to the bacterial ribosomal protein bS20 family.

In terms of biological role, binds directly to 16S ribosomal RNA. The chain is Small ribosomal subunit protein bS20 from Acidiphilium cryptum (strain JF-5).